The sequence spans 316 residues: tRNA-splicing endonuclease subunit Sen34 (316 aa).

The disordered stretch occupies residues 120–184; that stretch reads QAAKKQKLEQ…PGPSNGVTPL (65 aa). Polar residues-rich tracts occupy residues 144-159 and 168-181; these read EATQ…QPSA and LDSS…SNGV. Catalysis depends on residues Tyr-253, His-261, and Lys-292.

It belongs to the tRNA-intron endonuclease family. In terms of assembly, tRNA splicing endonuclease is a heterotetramer composed of TSEN2, TSEN15, TSEN34/LENG5 and TSEN54. tRNA splicing endonuclease complex also contains proteins of the pre-mRNA 3'-end processing machinery such as CLP1, CPSF1, CPSF4 and CSTF2.

The protein localises to the nucleus. Its subcellular location is the nucleolus. It carries out the reaction pretRNA = a 3'-half-tRNA molecule with a 5'-OH end + a 5'-half-tRNA molecule with a 2',3'-cyclic phosphate end + an intron with a 2',3'-cyclic phosphate and a 5'-hydroxyl terminus.. Functionally, constitutes one of the two catalytic subunit of the tRNA-splicing endonuclease complex, a complex responsible for identification and cleavage of the splice sites in pre-tRNA. It cleaves pre-tRNA at the 5'- and 3'-splice sites to release the intron. The products are an intron and two tRNA half-molecules bearing 2',3'-cyclic phosphate and 5'-OH termini. There are no conserved sequences at the splice sites, but the intron is invariably located at the same site in the gene, placing the splice sites an invariant distance from the constant structural features of the tRNA body. The tRNA splicing endonuclease is also involved in mRNA processing via its association with pre-mRNA 3'-end processing factors, establishing a link between pre-tRNA splicing and pre-mRNA 3'-end formation, suggesting that the endonuclease subunits function in multiple RNA-processing events. The polypeptide is tRNA-splicing endonuclease subunit Sen34 (Tsen34) (Mus musculus (Mouse)).